The primary structure comprises 530 residues: Glucose-6-phosphate isomerase (530 aa).

E347 acts as the Proton donor in catalysis. Residues H378 and K493 contribute to the active site.

It belongs to the GPI family.

The protein resides in the cytoplasm. It carries out the reaction alpha-D-glucose 6-phosphate = beta-D-fructose 6-phosphate. The protein operates within carbohydrate biosynthesis; gluconeogenesis. It participates in carbohydrate degradation; glycolysis; D-glyceraldehyde 3-phosphate and glycerone phosphate from D-glucose: step 2/4. In terms of biological role, catalyzes the reversible isomerization of glucose-6-phosphate to fructose-6-phosphate. This Chlamydia abortus (strain DSM 27085 / S26/3) (Chlamydophila abortus) protein is Glucose-6-phosphate isomerase.